A 405-amino-acid polypeptide reads, in one-letter code: uncharacterized protein (405 aa).

Disordered regions lie at residues 1-21 (MSKK…ESKT), 150-179 (IKDE…QEGP), and 285-405 (DDED…KSRS). Over residues 7–16 (KNASPKNNSD) the composition is skewed to polar residues. Acidic residues-rich tracts occupy residues 312-331 (SDDE…DDEE) and 349-358 (DDEDDEEEGE). Basic residues-rich tracts occupy residues 365–374 (SSKKSSKKAS) and 390–405 (PKKK…KSRS).

This is an uncharacterized protein from Acanthamoeba polyphaga (Amoeba).